The sequence spans 443 residues: DILAAFRVTPQPGVPPEEAGXXVAAESSTGTWTTVWTDGLTSLDRYKGRCYNIEPVPGETDQYICYVAYPLDLFEEGSVTNMFTSIVGNVFGFKALRALRLEDLRIPTAYVKTFQGPPHGIQVERDKLNKYGRPLLGCTIKPKLGLSAKNYGRACYECLRGGLDFTKDDENVNSQPFMRWRDRFLFCAEAIYKAQAETGEIKGHYLNATAGTCEEMMKRAIFARELGVPIIMHDYLTGGFTANTSLAHYCRDNGLLLHIHRAMHAVIDRQKNHGMXFRVLXKALRMSGGDHIHSGTVVGKLEGERDITLGFVDLLRDDFVEKDRSRGIYFTQDWVSLPGVIPVASGGIHVWHMPALTEIFGDDSVLQFGGGTLGHPWGNAPGAVANRVALXXXXXXXNXGXDLAAEGNAIIREASKWSPELAAACEVWKEIKFKFKAVDTLDK.

The substrate site is built by Asn-89 and Thr-139. Residue Lys-141 is the Proton acceptor of the active site. Residue Lys-143 coordinates substrate. Mg(2+) contacts are provided by Lys-167, Asp-169, and Glu-170. The residue at position 167 (Lys-167) is an N6-carboxylysine. His-260 acts as the Proton acceptor in catalysis. Positions 261, 293, and 345 each coordinate substrate.

Belongs to the RuBisCO large chain family. Type I subfamily. As to quaternary structure, heterohexadecamer of 8 large chains and 8 small chains; disulfide-linked. The disulfide link is formed within the large subunit homodimers. Requires Mg(2+) as cofactor. Post-translationally, the disulfide bond which can form in the large chain dimeric partners within the hexadecamer appears to be associated with oxidative stress and protein turnover.

It is found in the plastid. It localises to the chloroplast. It catalyses the reaction 2 (2R)-3-phosphoglycerate + 2 H(+) = D-ribulose 1,5-bisphosphate + CO2 + H2O. The catalysed reaction is D-ribulose 1,5-bisphosphate + O2 = 2-phosphoglycolate + (2R)-3-phosphoglycerate + 2 H(+). RuBisCO catalyzes two reactions: the carboxylation of D-ribulose 1,5-bisphosphate, the primary event in carbon dioxide fixation, as well as the oxidative fragmentation of the pentose substrate in the photorespiration process. Both reactions occur simultaneously and in competition at the same active site. The polypeptide is Ribulose bisphosphate carboxylase large chain (Sesamum indicum (Oriental sesame)).